The chain runs to 533 residues: GMP synthase [glutamine-hydrolyzing] (533 aa).

The Glutamine amidotransferase type-1 domain occupies 25 to 215 (SIVIFDFGSQ…VFNICKCHAN (191 aa)). Catalysis depends on Cys-102, which acts as the Nucleophile. Catalysis depends on residues His-189 and Glu-191. The GMPS ATP-PPase domain occupies 216–408 (WTMGNYIQES…LGLPDEMIWR (193 aa)). Residue 243 to 249 (SGGVDSA) participates in ATP binding.

In terms of assembly, homodimer.

The catalysed reaction is XMP + L-glutamine + ATP + H2O = GMP + L-glutamate + AMP + diphosphate + 2 H(+). The protein operates within purine metabolism; GMP biosynthesis; GMP from XMP (L-Gln route): step 1/1. Its function is as follows. Catalyzes the synthesis of GMP from XMP. The protein is GMP synthase [glutamine-hydrolyzing] of Dehalococcoides mccartyi (strain ATCC BAA-2266 / KCTC 15142 / 195) (Dehalococcoides ethenogenes (strain 195)).